A 661-amino-acid polypeptide reads, in one-letter code: UvrABC system protein B (661 aa).

Residues 28–414 (DGVNERKRHQ…HTDEMVEQII (387 aa)) form the Helicase ATP-binding domain. Position 41 to 48 (41 to 48 (GATGTGKT)) interacts with ATP. Positions 94–117 (YYDYYQPEAYVPSTDTFIEKDASI) match the Beta-hairpin motif. One can recognise a Helicase C-terminal domain in the interval 432 to 598 (QIDDLLSEIQ…TINKKIHDVI (167 aa)). The segment at 603 to 624 (ESDETNQQQQTELPKKMTKKER) is disordered. The UVR domain occupies 625–660 (QKTIENIEKEMKKAAKDLDFEKATELRDMLFELKAE).

The protein belongs to the UvrB family. In terms of assembly, forms a heterotetramer with UvrA during the search for lesions. Interacts with UvrC in an incision complex.

It is found in the cytoplasm. The UvrABC repair system catalyzes the recognition and processing of DNA lesions. A damage recognition complex composed of 2 UvrA and 2 UvrB subunits scans DNA for abnormalities. Upon binding of the UvrA(2)B(2) complex to a putative damaged site, the DNA wraps around one UvrB monomer. DNA wrap is dependent on ATP binding by UvrB and probably causes local melting of the DNA helix, facilitating insertion of UvrB beta-hairpin between the DNA strands. Then UvrB probes one DNA strand for the presence of a lesion. If a lesion is found the UvrA subunits dissociate and the UvrB-DNA preincision complex is formed. This complex is subsequently bound by UvrC and the second UvrB is released. If no lesion is found, the DNA wraps around the other UvrB subunit that will check the other stand for damage. The sequence is that of UvrABC system protein B from Staphylococcus epidermidis (strain ATCC 12228 / FDA PCI 1200).